The following is a 349-amino-acid chain: Ion-translocating oxidoreductase complex subunit D (349 aa).

The next 3 helical transmembrane spans lie at 20–42 (VMQRVILCLLPGLVVQCAFFGWG), 77–99 (SAMLTAILIGVAIPPLAPWWMIV), and 124–144 (AMAAYVLLLVSFPVQMTTWIA). An FMN phosphoryl threonine modification is found at Thr-185. A run of 5 helical transmembrane segments spans residues 212–232 (STGVGWFWVNLAYLAGGLVLL), 239–259 (WHISTGVLLGLFVASSIGFLL), 265–285 (ASPLMHLFSGATMLAAFFIAT), 291–311 (ATSSRGRIIFGALIGVLVYII), and 315–335 (GGYPDAFAFAVLLANLCAPFI).

This sequence belongs to the NqrB/RnfD family. The complex is composed of six subunits: RnfA, RnfB, RnfC, RnfD, RnfE and RnfG. FMN serves as cofactor.

The protein resides in the cell inner membrane. In terms of biological role, part of a membrane-bound complex that couples electron transfer with translocation of ions across the membrane. This is Ion-translocating oxidoreductase complex subunit D from Shewanella baltica (strain OS223).